Reading from the N-terminus, the 1188-residue chain is Adenomatous polyposis coli protein-related protein 1 (1188 aa).

Positions 1–50 are disordered; sequence MSSSSSDENETTIHRTGSNTGGSGIYSQPRAGSSKRTSNVRHDVSDVDDE. Residues 1–486 form a required for interaction with bar-1 and hmp-2 region; it reads MSSSSSDENE…LSLRATRASP (486 aa). One copy of the ARM repeat lies at 314 to 358; that stretch reads NCLKVLASLLSPDARFTSLVDSATGILKYVSQYLANTSTHLELRS. The span at 579–588 shows a compositional bias: low complexity; the sequence is IQQQQQMQKA. Disordered stretches follow at residues 579–624, 670–702, 726–751, 778–952, 1003–1092, and 1157–1181; these read IQQQ…SMNP, TESE…DGAT, TPNG…GPSL, QSEM…TMRF, CSMI…LKDK, and YQKP…PNPK. A required for interaction with pry-1 region spans residues 600–1188; the sequence is DLDIPTSTVM…NPKQMLVTIV (589 aa). Composition is skewed to polar residues over residues 604 to 624 and 677 to 701; these read PTST…SMNP and LTSQ…SDGA. Polar residues-rich tracts occupy residues 778–788 and 800–811; these read QSEMPTSSSTP and FSPTQKTTSSPA. Basic and acidic residues-rich tracts occupy residues 832 to 843 and 871 to 900; these read RRQDASDADRLL and EPER…DHNG. 4 stretches are compositionally biased toward polar residues: residues 909 to 929, 937 to 946, 1014 to 1039, and 1164 to 1180; these read WSPQ…SSED, EPNSSTSGAA, QRNE…SASS, and GRNN…TPNP.

The protein belongs to the adenomatous polyposis coli (APC) family. Interacts (via N-terminus) with bar-1 and hmp-2; the interaction with hmp-2 is relatively weak. Interacts (via C-terminus) with pry-1 (via N-terminus). Probably associates with bar-1, gsk-3, pry-1 in a complex. As to expression, during the L1 stage, expressed in vulval precursor cells (P3-8.p), seam cells and excretory cells.

It is found in the cell junction. Its subcellular location is the adherens junction. It localises to the cytoplasm. The protein resides in the nucleus. Has a role in endoderm cell specification and pharyngeal development. Required for the migration of epithelial cells, organization of the anterior seam cells and ceh-13 expression during embryo morphogenesis. Prevents hyperactivation of the Wnt signaling pathway during endoderm development, probably by preventing hmp-2 nuclear translocation. During larval development, apr-1 is required for expression of lin-39 in P3-8.p. Shown to negatively regulate Wnt signaling in vulval precursor cells. Has a role in cell division by establishing the polarity of the mother cell which forms the asymmetries of the daughter nuclei. During the L4 larval stage, it is required for the asymmetric division and self-renewal of seam cells. Thought to regulate export of wrm-1 from the nucleus possibly as part of a complex involving pry-1. This chain is Adenomatous polyposis coli protein-related protein 1, found in Caenorhabditis elegans.